We begin with the raw amino-acid sequence, 135 residues long: Beta-galactoside-binding lectin (135 aa).

Serine 2 is subject to N-acetylserine. A disulfide bond links cysteine 3 and cysteine 8. The 131-residue stretch at 5–135 (GPVCTNLGLK…DFTLRSVSWE (131 aa)) folds into the Galectin domain. A beta-D-galactoside contacts are provided by residues 46–50 (HFNPR), histidine 54, asparagine 63, 70–73 (WGTE), and 70–76 (WGTEQRE).

In terms of assembly, homodimer; disulfide-linked. (Microbial infection) Interacts with newcastle disease virus protein HN; this interaction inhibits viral adsorption rather than internalization. As to expression, mainly in the intestine (adult), mainly in the skin (embryo).

In terms of biological role, this protein binds beta-galactoside. May participate in host antiviral defense through specific interaction with glycans on the viral envelope glycoproteins. The sequence is that of Beta-galactoside-binding lectin (CG-1B) from Gallus gallus (Chicken).